The chain runs to 467 residues: MATGKIVQIIGAVVDVEFPQSEVPSVYDALNVTDSKERLVLEVQQQLGGGVVRCIVMGSSDGLRRGVEVVNTGAPISVPVGTKTLGRIMNVLGDAIDERGEIGAEEVYSIHREAPSYEEQSNETALLETGVKVIDLVCPFAKGGKIGLFGGAGVGKTVNMMELINNIALQHSGLSVFAGVGERTREGNDFYFEMQEAGVVNVENPEESKVAMVYGQMNEPPGNRLRVALTGLTMAERFRDEGRDVLLFVDNIYRYTLAGTEVSALLGRMPSAVGYQPTLAEEMGVLQERITSTKQGSITSVQAVYVPADDLTDPSPATTFAHLDATVVLNRNIAAMGLYPAIDPLDSTSRQLDPLVVGQDHYDIARGVQQTLQRYKELKDIIAILGMDELSESDKQVVSRARKIERFLTQPYHVAEVFTGDPGVYVPLKETLRGFKGLLAGEYDDIPEQAFMYCGTIDDAIENAKKL.

150–157 (GGAGVGKT) contacts ATP.

The protein belongs to the ATPase alpha/beta chains family. As to quaternary structure, F-type ATPases have 2 components, CF(1) - the catalytic core - and CF(0) - the membrane proton channel. CF(1) has five subunits: alpha(3), beta(3), gamma(1), delta(1), epsilon(1). CF(0) has three main subunits: a(1), b(2) and c(9-12). The alpha and beta chains form an alternating ring which encloses part of the gamma chain. CF(1) is attached to CF(0) by a central stalk formed by the gamma and epsilon chains, while a peripheral stalk is formed by the delta and b chains.

It localises to the cell inner membrane. The catalysed reaction is ATP + H2O + 4 H(+)(in) = ADP + phosphate + 5 H(+)(out). In terms of biological role, produces ATP from ADP in the presence of a proton gradient across the membrane. The catalytic sites are hosted primarily by the beta subunits. The sequence is that of ATP synthase subunit beta from Vibrio parahaemolyticus serotype O3:K6 (strain RIMD 2210633).